We begin with the raw amino-acid sequence, 345 residues long: MSSSHTIQETKEVHTKTNKRIQWDDLDPKRYYFYNFLLGGSIDLLMFPLDVIRTRLQVQGSQNVIQSFPQYNGTFDGFKKLIRLEGKRALYKGFLTSECGYLCSRAIYFGSYEFVKQGFLKGRSDSDSDLLFVTTISGAISEALASVIWVPFDVATQSVQIQGSLSKPKYKGGSDVFKKIYGERGIKGLYKGFGATIIRNVPYSGIWWGTYEISKSKLTQFNIRQKLGLKERSSHSLAVSAEIDKNNPSHEVENEDPIIHFISGFFAAVFATSITNPLDVAKTRLQTGVFPENEKPNFYTIIKSTIRKEGIRALWKGLVPSLLTSTPYSMISIFLYEEVKKLSLK.

The Mitochondrial intermembrane portion of the chain corresponds to 1–31; that stretch reads MSSSHTIQETKEVHTKTNKRIQWDDLDPKRY. 3 Solcar repeats span residues 30–118, 129–217, and 255–342; these read RYYF…VKQG, DLLF…SKSK, and EDPI…VKKL. A helical membrane pass occupies residues 32–52; sequence YFYNFLLGGSIDLLMFPLDVI. At 53–88 the chain is on the mitochondrial matrix side; that stretch reads RTRLQVQGSQNVIQSFPQYNGTFDGFKKLIRLEGKR. Residues 89-110 form a helical membrane-spanning segment; it reads ALYKGFLTSECGYLCSRAIYFG. Over 111–129 the chain is Mitochondrial intermembrane; sequence SYEFVKQGFLKGRSDSDSD. A helical membrane pass occupies residues 130 to 150; it reads LLFVTTISGAISEALASVIWV. Residues 151-191 lie on the Mitochondrial matrix side of the membrane; the sequence is PFDVATQSVQIQGSLSKPKYKGGSDVFKKIYGERGIKGLYK. The helical transmembrane segment at 192–208 threads the bilayer; the sequence is GFGATIIRNVPYSGIWW. At 209–257 the chain is on the mitochondrial intermembrane side; the sequence is GTYEISKSKLTQFNIRQKLGLKERSSHSLAVSAEIDKNNPSHEVENEDP. The chain crosses the membrane as a helical span at residues 258-278; it reads IIHFISGFFAAVFATSITNPL. Residues 279–316 lie on the Mitochondrial matrix side of the membrane; that stretch reads DVAKTRLQTGVFPENEKPNFYTIIKSTIRKEGIRALWK. A helical transmembrane segment spans residues 317–337; the sequence is GLVPSLLTSTPYSMISIFLYE. The Mitochondrial intermembrane segment spans residues 338 to 345; that stretch reads EVKKLSLK.

The protein belongs to the mitochondrial carrier (TC 2.A.29) family.

It localises to the mitochondrion inner membrane. Mitochondrial solute carriers shuttle metabolites, nucleotides, and cofactors through the mitochondrial inner membrane. This is Mitochondrial substrate carrier family protein J (mcfJ) from Dictyostelium discoideum (Social amoeba).